The sequence spans 264 residues: Methylthioribulose-1-phosphate dehydratase (264 aa).

Position 110 (cysteine 110) interacts with substrate. Residues histidine 128 and histidine 130 each contribute to the Zn(2+) site. The active-site Proton donor/acceptor is glutamate 151. Histidine 213 is a binding site for Zn(2+).

Belongs to the aldolase class II family. MtnB subfamily. The cofactor is Zn(2+).

It localises to the cytoplasm. It carries out the reaction 5-(methylsulfanyl)-D-ribulose 1-phosphate = 5-methylsulfanyl-2,3-dioxopentyl phosphate + H2O. It functions in the pathway amino-acid biosynthesis; L-methionine biosynthesis via salvage pathway; L-methionine from S-methyl-5-thio-alpha-D-ribose 1-phosphate: step 2/6. Catalyzes the dehydration of methylthioribulose-1-phosphate (MTRu-1-P) into 2,3-diketo-5-methylthiopentyl-1-phosphate (DK-MTP-1-P). The protein is Methylthioribulose-1-phosphate dehydratase of Vanderwaltozyma polyspora (strain ATCC 22028 / DSM 70294 / BCRC 21397 / CBS 2163 / NBRC 10782 / NRRL Y-8283 / UCD 57-17) (Kluyveromyces polysporus).